The following is a 360-amino-acid chain: Type 2 DNA topoisomerase 6 subunit A (360 aa).

One can recognise a Topo IIA-type catalytic domain in the interval 3–140 (EIERRCLRAL…FHIRPEEDGA (138 aa)). The active-site O-(5'-phospho-DNA)-tyrosine intermediate is the Tyr97. Glu193 and Asp245 together coordinate Mg(2+).

Belongs to the TOP6A family. Homodimer. Heterotetramer of two Top6A and two Top6B chains. The cofactor is Mg(2+).

The enzyme catalyses ATP-dependent breakage, passage and rejoining of double-stranded DNA.. Functionally, relaxes both positive and negative superturns and exhibits a strong decatenase activity. The polypeptide is Type 2 DNA topoisomerase 6 subunit A (Archaeoglobus fulgidus (strain ATCC 49558 / DSM 4304 / JCM 9628 / NBRC 100126 / VC-16)).